A 131-amino-acid polypeptide reads, in one-letter code: Hydrogenase maturation factor HypA (131 aa).

Ni(2+) is bound at residue His2. 4 residues coordinate Zn(2+): Cys73, Cys76, Cys105, and Cys108.

It belongs to the HypA/HybF family.

Functionally, involved in the maturation of [NiFe] hydrogenases. Required for nickel insertion into the metal center of the hydrogenase. This chain is Hydrogenase maturation factor HypA, found in Thermomicrobium roseum (strain ATCC 27502 / DSM 5159 / P-2).